Here is a 509-residue protein sequence, read N- to C-terminus: 2,3-bisphosphoglycerate-independent phosphoglycerate mutase (509 aa).

Residues aspartate 13 and serine 63 each contribute to the Mn(2+) site. Catalysis depends on serine 63, which acts as the Phosphoserine intermediate. Substrate is bound by residues histidine 124, 154–155 (RD), arginine 186, arginine 192, 261–264 (RPDR), and lysine 335. The Mn(2+) site is built by aspartate 400, histidine 404, aspartate 441, histidine 442, and histidine 459.

It belongs to the BPG-independent phosphoglycerate mutase family. Monomer. Mn(2+) serves as cofactor.

The catalysed reaction is (2R)-2-phosphoglycerate = (2R)-3-phosphoglycerate. Its pathway is carbohydrate degradation; glycolysis; pyruvate from D-glyceraldehyde 3-phosphate: step 3/5. In terms of biological role, catalyzes the interconversion of 2-phosphoglycerate and 3-phosphoglycerate. The polypeptide is 2,3-bisphosphoglycerate-independent phosphoglycerate mutase (Desulforudis audaxviator (strain MP104C)).